Consider the following 597-residue polypeptide: HECT-type ubiquitin ligase-interacting protein creD (597 aa).

3 disordered regions span residues 375 to 398 (EVDP…GTLS), 439 to 492 (ASEH…MATP), and 576 to 597 (SRSH…RGRA). Residues 452–466 (GPPSGSNTHGSNTHA) are compositionally biased toward polar residues. Basic and acidic residues predominate over residues 472–483 (LSRRASDEDVHD).

The protein belongs to the arrestin family. In terms of assembly, interacts with hulA.

Functionally, component of the regulatory network controlling carbon source utilization through ubiquitination and deubiquitination involving creA, creB, creC, creD and acrB. May be involved in signaling by recognizing appropriately phosphorylated substrates via its arrestin domains and then recruit a HECT-type ubiquitin ligase such as hulA, leading to ubiquitination of the substrate, providing a link between ubiquitination and phosphorylation in protein regulation and stability. The sequence is that of HECT-type ubiquitin ligase-interacting protein creD (creD) from Emericella nidulans (strain FGSC A4 / ATCC 38163 / CBS 112.46 / NRRL 194 / M139) (Aspergillus nidulans).